We begin with the raw amino-acid sequence, 97 residues long: Aspartyl/glutamyl-tRNA(Asn/Gln) amidotransferase subunit C (97 aa).

This sequence belongs to the GatC family. Heterotrimer of A, B and C subunits.

It catalyses the reaction L-glutamyl-tRNA(Gln) + L-glutamine + ATP + H2O = L-glutaminyl-tRNA(Gln) + L-glutamate + ADP + phosphate + H(+). The enzyme catalyses L-aspartyl-tRNA(Asn) + L-glutamine + ATP + H2O = L-asparaginyl-tRNA(Asn) + L-glutamate + ADP + phosphate + 2 H(+). Functionally, allows the formation of correctly charged Asn-tRNA(Asn) or Gln-tRNA(Gln) through the transamidation of misacylated Asp-tRNA(Asn) or Glu-tRNA(Gln) in organisms which lack either or both of asparaginyl-tRNA or glutaminyl-tRNA synthetases. The reaction takes place in the presence of glutamine and ATP through an activated phospho-Asp-tRNA(Asn) or phospho-Glu-tRNA(Gln). This chain is Aspartyl/glutamyl-tRNA(Asn/Gln) amidotransferase subunit C, found in Parasynechococcus marenigrum (strain WH8102).